A 367-amino-acid chain; its full sequence is Phospho-N-acetylmuramoyl-pentapeptide-transferase (367 aa).

A run of 10 helical transmembrane segments spans residues 13–33 (ISGI…ALTL), 49–69 (LPLL…VPLL), 95–115 (MGGI…SNFA), 119–139 (LAVS…DWQI), 154–174 (LALQ…NQPA), 183–203 (WVSF…FVLV), 215–235 (IDGL…AIVA), 237–257 (TSPA…GFLA), 281–301 (AVAL…IFFV), and 347–367 (VSSF…IAPF).

Belongs to the glycosyltransferase 4 family. MraY subfamily. The cofactor is Mg(2+).

It localises to the cell inner membrane. It catalyses the reaction UDP-N-acetyl-alpha-D-muramoyl-L-alanyl-gamma-D-glutamyl-meso-2,6-diaminopimeloyl-D-alanyl-D-alanine + di-trans,octa-cis-undecaprenyl phosphate = di-trans,octa-cis-undecaprenyl diphospho-N-acetyl-alpha-D-muramoyl-L-alanyl-D-glutamyl-meso-2,6-diaminopimeloyl-D-alanyl-D-alanine + UMP. It functions in the pathway cell wall biogenesis; peptidoglycan biosynthesis. Functionally, catalyzes the initial step of the lipid cycle reactions in the biosynthesis of the cell wall peptidoglycan: transfers peptidoglycan precursor phospho-MurNAc-pentapeptide from UDP-MurNAc-pentapeptide onto the lipid carrier undecaprenyl phosphate, yielding undecaprenyl-pyrophosphoryl-MurNAc-pentapeptide, known as lipid I. This Trichormus variabilis (strain ATCC 29413 / PCC 7937) (Anabaena variabilis) protein is Phospho-N-acetylmuramoyl-pentapeptide-transferase.